The primary structure comprises 181 residues: Peptide deformylase (181 aa).

2 residues coordinate Fe cation: Cys99 and His141. The active site involves Glu142. A Fe cation-binding site is contributed by His145.

Belongs to the polypeptide deformylase family. It depends on Fe(2+) as a cofactor.

The enzyme catalyses N-terminal N-formyl-L-methionyl-[peptide] + H2O = N-terminal L-methionyl-[peptide] + formate. Removes the formyl group from the N-terminal Met of newly synthesized proteins. Requires at least a dipeptide for an efficient rate of reaction. N-terminal L-methionine is a prerequisite for activity but the enzyme has broad specificity at other positions. In Chlamydia muridarum (strain MoPn / Nigg), this protein is Peptide deformylase.